Consider the following 1071-residue polypeptide: Carbamoyl phosphate synthase large chain (1071 aa).

Positions 1–403 (MPKRTDLKSI…SFQKALRGLE (403 aa)) are carboxyphosphate synthetic domain. The ATP-grasp 1 domain maps to 133 to 328 (KEAMEKIGLS…IAKVAANWAV (196 aa)). Positions 169, 175, 176, 208, 210, 215, 241, 242, 243, 285, and 299 each coordinate ATP. The Mg(2+) site is built by Gln285, Glu299, and Asn301. Mn(2+)-binding residues include Gln285, Glu299, and Asn301. Residues 404-548 (TGLCGFNPAR…YSTYEEECES (145 aa)) are oligomerization domain. The carbamoyl phosphate synthetic domain stretch occupies residues 549 to 930 (RPSDRKKVMI…AYYKAQLGAG (382 aa)). Residues 673-864 (QKVLNDLGLR…LAKVGARCMA (192 aa)) form the ATP-grasp 2 domain. ATP-binding residues include Arg709, Phe748, Leu750, Glu755, Gly780, Ile781, His782, Ser783, Gln823, and Glu835. Mg(2+)-binding residues include Gln823, Glu835, and Asn837. Gln823, Glu835, and Asn837 together coordinate Mn(2+). An MGS-like domain is found at 931 to 1071 (ERLNPTGKIF…ELHGRLKNRN (141 aa)). The allosteric domain stretch occupies residues 931 to 1071 (ERLNPTGKIF…ELHGRLKNRN (141 aa)).

The protein belongs to the CarB family. As to quaternary structure, composed of two chains; the small (or glutamine) chain promotes the hydrolysis of glutamine to ammonia, which is used by the large (or ammonia) chain to synthesize carbamoyl phosphate. Tetramer of heterodimers (alpha,beta)4. Mg(2+) is required as a cofactor. The cofactor is Mn(2+).

The enzyme catalyses hydrogencarbonate + L-glutamine + 2 ATP + H2O = carbamoyl phosphate + L-glutamate + 2 ADP + phosphate + 2 H(+). It carries out the reaction hydrogencarbonate + NH4(+) + 2 ATP = carbamoyl phosphate + 2 ADP + phosphate + 2 H(+). The protein operates within amino-acid biosynthesis; L-arginine biosynthesis; carbamoyl phosphate from bicarbonate: step 1/1. It functions in the pathway pyrimidine metabolism; UMP biosynthesis via de novo pathway; (S)-dihydroorotate from bicarbonate: step 1/3. Its function is as follows. Large subunit of the glutamine-dependent carbamoyl phosphate synthetase (CPSase). CPSase catalyzes the formation of carbamoyl phosphate from the ammonia moiety of glutamine, carbonate, and phosphate donated by ATP, constituting the first step of 2 biosynthetic pathways, one leading to arginine and/or urea and the other to pyrimidine nucleotides. The large subunit (synthetase) binds the substrates ammonia (free or transferred from glutamine from the small subunit), hydrogencarbonate and ATP and carries out an ATP-coupled ligase reaction, activating hydrogencarbonate by forming carboxy phosphate which reacts with ammonia to form carbamoyl phosphate. This Neisseria gonorrhoeae protein is Carbamoyl phosphate synthase large chain.